Consider the following 560-residue polypeptide: DNA ligase B (560 aa).

The N6-AMP-lysine intermediate role is filled by Lys-124.

This sequence belongs to the NAD-dependent DNA ligase family. LigB subfamily.

It catalyses the reaction NAD(+) + (deoxyribonucleotide)n-3'-hydroxyl + 5'-phospho-(deoxyribonucleotide)m = (deoxyribonucleotide)n+m + AMP + beta-nicotinamide D-nucleotide.. In terms of biological role, catalyzes the formation of phosphodiester linkages between 5'-phosphoryl and 3'-hydroxyl groups in double-stranded DNA using NAD as a coenzyme and as the energy source for the reaction. This Escherichia coli O17:K52:H18 (strain UMN026 / ExPEC) protein is DNA ligase B.